A 100-amino-acid polypeptide reads, in one-letter code: Urease subunit gamma (100 aa).

Belongs to the urease gamma subunit family. In terms of assembly, heterotrimer of UreA (gamma), UreB (beta) and UreC (alpha) subunits. Three heterotrimers associate to form the active enzyme.

It localises to the cytoplasm. It catalyses the reaction urea + 2 H2O + H(+) = hydrogencarbonate + 2 NH4(+). The protein operates within nitrogen metabolism; urea degradation; CO(2) and NH(3) from urea (urease route): step 1/1. The chain is Urease subunit gamma from Trichormus variabilis (strain ATCC 29413 / PCC 7937) (Anabaena variabilis).